Here is a 167-residue protein sequence, read N- to C-terminus: Ubiquitin-conjugating enzyme E2 15 (167 aa).

Residues 5-165 form the UBC core domain; the sequence is ASEQLLRKQL…VRRLVRRSIE (161 aa). C90 functions as the Glycyl thioester intermediate in the catalytic mechanism.

Belongs to the ubiquitin-conjugating enzyme family.

It carries out the reaction S-ubiquitinyl-[E1 ubiquitin-activating enzyme]-L-cysteine + [E2 ubiquitin-conjugating enzyme]-L-cysteine = [E1 ubiquitin-activating enzyme]-L-cysteine + S-ubiquitinyl-[E2 ubiquitin-conjugating enzyme]-L-cysteine.. Its pathway is protein modification; protein ubiquitination. Functionally, catalyzes the covalent attachment of ubiquitin to other proteins. Has a role in the formation of chromatin structures that influence the localization of transcriptional silencing factors. The polypeptide is Ubiquitin-conjugating enzyme E2 15 (ubc15) (Schizosaccharomyces pombe (strain 972 / ATCC 24843) (Fission yeast)).